The sequence spans 46 residues: Viscotoxin-1-PS (46 aa).

Intrachain disulfides connect Cys3–Cys40, Cys4–Cys32, and Cys16–Cys26.

This sequence belongs to the plant thionin (TC 1.C.44) family.

It localises to the secreted. Thionins are small plant proteins which are toxic to animal cells. They seem to exert their toxic effect at the level of the cell membrane. Their precise function is not known. In Viscum album (European mistletoe), this protein is Viscotoxin-1-PS (THI2.4).